The following is a 143-amino-acid chain: Ribosomal RNA large subunit methyltransferase H (143 aa).

Residues glycine 95 and 111–116 (FSDLTF) contribute to the S-adenosyl-L-methionine site.

Belongs to the RNA methyltransferase RlmH family. As to quaternary structure, homodimer.

It localises to the cytoplasm. The enzyme catalyses pseudouridine(1915) in 23S rRNA + S-adenosyl-L-methionine = N(3)-methylpseudouridine(1915) in 23S rRNA + S-adenosyl-L-homocysteine + H(+). Functionally, specifically methylates the pseudouridine at position 1915 (m3Psi1915) in 23S rRNA. The protein is Ribosomal RNA large subunit methyltransferase H of Metamycoplasma arthritidis (strain 158L3-1) (Mycoplasma arthritidis).